We begin with the raw amino-acid sequence, 277 residues long: Phosphonates import ATP-binding protein PhnC 2 (277 aa).

Residues 3–251 (ISLNGISVQH…LLQALYAQHL (249 aa)) enclose the ABC transporter domain. Residue 40 to 47 (GPSGAGKT) coordinates ATP.

The protein belongs to the ABC transporter superfamily. Phosphonates importer (TC 3.A.1.9.1) family. In terms of assembly, the complex is composed of two ATP-binding proteins (PhnC), two transmembrane proteins (PhnE) and a solute-binding protein (PhnD).

The protein localises to the cell inner membrane. It catalyses the reaction phosphonate(out) + ATP + H2O = phosphonate(in) + ADP + phosphate + H(+). Functionally, part of the ABC transporter complex PhnCDE involved in phosphonates import. Responsible for energy coupling to the transport system. The protein is Phosphonates import ATP-binding protein PhnC 2 of Albidiferax ferrireducens (strain ATCC BAA-621 / DSM 15236 / T118) (Rhodoferax ferrireducens).